Here is a 1478-residue protein sequence, read N- to C-terminus: DNA-directed RNA polymerase subunit beta' (1478 aa).

Mg(2+) is bound by residues aspartate 535, aspartate 537, and aspartate 539. The Zn(2+) site is built by cysteine 1034, cysteine 1109, cysteine 1116, and cysteine 1119.

Belongs to the RNA polymerase beta' chain family. As to quaternary structure, the RNAP catalytic core consists of 2 alpha, 1 beta, 1 beta' and 1 omega subunit. When a sigma factor is associated with the core the holoenzyme is formed, which can initiate transcription. The cofactor is Mg(2+). Requires Zn(2+) as cofactor.

The enzyme catalyses RNA(n) + a ribonucleoside 5'-triphosphate = RNA(n+1) + diphosphate. In terms of biological role, DNA-dependent RNA polymerase catalyzes the transcription of DNA into RNA using the four ribonucleoside triphosphates as substrates. The sequence is that of DNA-directed RNA polymerase subunit beta' from Mycoplasmopsis agalactiae (strain NCTC 10123 / CIP 59.7 / PG2) (Mycoplasma agalactiae).